We begin with the raw amino-acid sequence, 458 residues long: Flavonol 3-O-glucosyltransferase UGT76E12 (458 aa).

His-25 (proton acceptor) is an active-site residue. An an anthocyanidin-binding site is contributed by His-25. The Charge relay role is filled by Asp-118. Positions 140, 339, 341, 356, 359, 360, 361, and 364 each coordinate UDP-alpha-D-glucose. Gly-379 provides a ligand contact to an anthocyanidin. Residues Asp-380 and Gln-381 each contribute to the UDP-alpha-D-glucose site.

The protein belongs to the UDP-glycosyltransferase family.

It carries out the reaction a flavonol + UDP-alpha-D-glucose = a flavonol 3-O-beta-D-glucoside + UDP + H(+). It catalyses the reaction a 7-O-hydroxy-flavonol + UDP-alpha-D-glucose = a flavonol 7-O-beta-D-glucoside + UDP + H(+). Functionally, possesses quercetin 3-O-glucosyltransferase and 7-O-glucosyltransferase activities in vitro. The protein is Flavonol 3-O-glucosyltransferase UGT76E12 of Arabidopsis thaliana (Mouse-ear cress).